Reading from the N-terminus, the 177-residue chain is ATP synthase subunit b (177 aa).

A helical transmembrane segment spans residues 16 to 36 (HLLLANMIVTIVVFLLLLILL).

This sequence belongs to the ATPase B chain family. As to quaternary structure, F-type ATPases have 2 components, F(1) - the catalytic core - and F(0) - the membrane proton channel. F(1) has five subunits: alpha(3), beta(3), gamma(1), delta(1), epsilon(1). F(0) has three main subunits: a(1), b(2) and c(10-14). The alpha and beta chains form an alternating ring which encloses part of the gamma chain. F(1) is attached to F(0) by a central stalk formed by the gamma and epsilon chains, while a peripheral stalk is formed by the delta and b chains.

Its subcellular location is the cell membrane. F(1)F(0) ATP synthase produces ATP from ADP in the presence of a proton or sodium gradient. F-type ATPases consist of two structural domains, F(1) containing the extramembraneous catalytic core and F(0) containing the membrane proton channel, linked together by a central stalk and a peripheral stalk. During catalysis, ATP synthesis in the catalytic domain of F(1) is coupled via a rotary mechanism of the central stalk subunits to proton translocation. Functionally, component of the F(0) channel, it forms part of the peripheral stalk, linking F(1) to F(0). The sequence is that of ATP synthase subunit b from Exiguobacterium sibiricum (strain DSM 17290 / CCUG 55495 / CIP 109462 / JCM 13490 / 255-15).